We begin with the raw amino-acid sequence, 125 residues long: Small ribosomal subunit protein uS13 (125 aa).

The interval 93–125 (RKGLPVRGQRTKTNARTRKGPKRTVAGKKKAGR) is disordered.

The protein belongs to the universal ribosomal protein uS13 family. As to quaternary structure, part of the 30S ribosomal subunit. Forms a loose heterodimer with protein S19. Forms two bridges to the 50S subunit in the 70S ribosome.

Its function is as follows. Located at the top of the head of the 30S subunit, it contacts several helices of the 16S rRNA. In the 70S ribosome it contacts the 23S rRNA (bridge B1a) and protein L5 of the 50S subunit (bridge B1b), connecting the 2 subunits; these bridges are implicated in subunit movement. Contacts the tRNAs in the A and P-sites. The sequence is that of Small ribosomal subunit protein uS13 from Paenarthrobacter aurescens (strain TC1).